Reading from the N-terminus, the 838-residue chain is Major vault protein (838 aa).

MVP repeat units lie at residues 13 to 52, 53 to 114, 118 to 170, 171 to 223, 224 to 278, 280 to 328, 329 to 380, and 381 to 433; these read VHILDNNTNVTRCMVGPLVYTRKENERCLFNPKPCIVVPP, RFYC…FKLK, VNTG…HIIS, PNTA…ITLT, DTEA…IVLN, KEYC…NVVS, KDQA…IALD, and KNEG…CMSE.

The vault ribonucleoprotein particle is a huge (400 A x 670 A) cage structure of 12.9 MDa. It consists of a dimer of half-vaults, with each half-vault comprising 39 identical major vault protein (MVP) chains, PARP4 and one or more vault RNAs (vRNAs).

The protein localises to the cytoplasm. Its subcellular location is the nucleus. Required for normal vault structure. Vaults are multi-subunit structures that may act as scaffolds for proteins involved in signal transduction. Vaults may also play a role in nucleo-cytoplasmic transport. This chain is Major vault protein, found in Trypanosoma cruzi (strain CL Brener).